The following is a 310-amino-acid chain: Carbamate kinase 1 (310 aa).

It belongs to the carbamate kinase family.

It is found in the cytoplasm. It carries out the reaction hydrogencarbonate + NH4(+) + ATP = carbamoyl phosphate + ADP + H2O + H(+). Its pathway is metabolic intermediate metabolism; carbamoyl phosphate degradation; CO(2) and NH(3) from carbamoyl phosphate: step 1/1. This is Carbamate kinase 1 (arcC1) from Staphylococcus epidermidis (strain ATCC 12228 / FDA PCI 1200).